A 689-amino-acid chain; its full sequence is 7SK snRNA methylphosphate capping enzyme (689 aa).

N-acetylmethionine is present on M1. Residues 1-10 (MIEMAAEKEP) show a composition bias toward basic and acidic residues. The tract at residues 1 to 167 (MIEMAAEKEP…GGGGFKHPAF (167 aa)) is disordered. The span at 52-84 (GRCAPSAGSPAAAVGRESPGAAATSSSGPQAQQ) shows a compositional bias: low complexity. 4 positions are modified to phosphoserine: S57, S60, S69, and S101. R117 carries the omega-N-methylarginine modification. A phosphoserine mark is found at S152, S175, and S179. The residue at position 213 (T213) is a Phosphothreonine. Residues S216, S217, and S254 each carry the phosphoserine modification. Over residues 258–269 (TGRKRHRHRGQH) the composition is skewed to basic residues. The disordered stretch occupies residues 258-314 (TGRKRHRHRGQHHQQQQAAGGSESHPVPPTAPLTPLLHGEGASQQPRHRGQNRDAPQ). At T291 the chain carries Phosphothreonine. A phosphoserine mark is found at S330 and S344. Residues 332–407 (LPSALQGPSG…HHPLPAAGFK (76 aa)) are disordered. A compositionally biased stretch (low complexity) spans 338-359 (GPSGSLSAPPAASVISAPPSSS). Positions 360-369 (SRHRKRRRTS) are enriched in basic residues. S390 carries the post-translational modification Phosphoserine. S-adenosyl-L-methionine-binding positions include Y422, R433, 451 to 453 (GCN), 474 to 475 (DI), 559 to 560 (NY), and L581. Residues 431–686 (DGRLRVLKPE…PVYLFHKARS (256 aa)) enclose the Bin3-type SAM domain. Residue K643 forms a Glycyl lysine isopeptide (Lys-Gly) (interchain with G-Cter in SUMO2) linkage.

The protein belongs to the methyltransferase superfamily. In terms of assembly, core component of the 7SK RNP complex, at least composed of 7SK RNA, LARP7, MEPCE, HEXIM1 (or HEXIM2) and P-TEFb (composed of CDK9 and CCNT1/cyclin-T1). Interacts with METTL16. Interacts with RBM7; upon genotoxic stress this interaction is enhanced, triggering the release of inactive P-TEFb complex from the core, yielding to P-TEFb complex activation. Dephosphorylated at Ser-152 by the PNUTS-PP1 complex, promoting RNA polymerase II transcription pause-release. Expressed in chronic myeloid leukemia cells, adrenal gland, brain, cerebellum, kidney, lung, mammary gland and testis. Weakly or not expressed in other tissues.

The protein localises to the nucleus. The enzyme catalyses a 5'-end triphospho-guanosine-ribonucleotide-snRNA + S-adenosyl-L-methionine = a 5'-end methyltriphosphate-guanosine-ribonucleotide-snRNA + S-adenosyl-L-homocysteine. In terms of biological role, S-adenosyl-L-methionine-dependent methyltransferase that adds a methylphosphate cap at the 5'-end of 7SK snRNA (7SK RNA), leading to stabilize it. Also has a non-enzymatic function as part of the 7SK RNP complex: the 7SK RNP complex sequesters the positive transcription elongation factor b (P-TEFb) in a large inactive 7SK RNP complex preventing RNA polymerase II phosphorylation and subsequent transcriptional elongation. The 7SK RNP complex also promotes snRNA gene transcription by RNA polymerase II via interaction with the little elongation complex (LEC). In the 7SK RNP complex, MEPCE is required to stabilize 7SK RNA and facilitate the assembly of 7SK RNP complex. MEPCE has a non-enzymatic function in the 7SK RNP complex; interaction with LARP7 within the 7SK RNP complex occluding its catalytic center. Also required for stability of U6 snRNAs. In Homo sapiens (Human), this protein is 7SK snRNA methylphosphate capping enzyme.